Here is a 1031-residue protein sequence, read N- to C-terminus: Error-prone DNA polymerase (1031 aa).

This sequence belongs to the DNA polymerase type-C family. DnaE2 subfamily.

It localises to the cytoplasm. It catalyses the reaction DNA(n) + a 2'-deoxyribonucleoside 5'-triphosphate = DNA(n+1) + diphosphate. In terms of biological role, DNA polymerase involved in damage-induced mutagenesis and translesion synthesis (TLS). It is not the major replicative DNA polymerase. In Pseudomonas aeruginosa (strain ATCC 15692 / DSM 22644 / CIP 104116 / JCM 14847 / LMG 12228 / 1C / PRS 101 / PAO1), this protein is Error-prone DNA polymerase.